A 1331-amino-acid polypeptide reads, in one-letter code: Mitogen-activated protein kinase kinase kinase 15 (1331 aa).

The segment covering 1–13 (MEGGGGSGGGGGP) has biased composition (gly residues). The segment at 1–61 (MEGGGGSGGG…GEAEGGRGPR (61 aa)) is disordered. In terms of domain architecture, Protein kinase spans 656 to 912 (NGERVVLGKG…AADLLQEGFL (257 aa)). Residues 662–670 (LGKGSYGIV) and lysine 685 each bind ATP. The Proton acceptor role is filled by aspartate 777. Disordered stretches follow at residues 934–964 (GTGTLALPSSGELVGSSSSEHGSISPDSDAQ) and 983–1005 (LSVPDESPALDDRSTALPPEERD). Over residues 940 to 962 (LPSSGELVGSSSSEHGSISPDSD) the composition is skewed to low complexity. Residues 992–1005 (LDDRSTALPPEERD) are compositionally biased toward basic and acidic residues. Positions 1216–1236 (LVQKEREYQNLLRLILDQKTQ) form a coiled coil.

It belongs to the protein kinase superfamily. STE Ser/Thr protein kinase family. MAP kinase kinase kinase subfamily. Mg(2+) serves as cofactor.

It carries out the reaction L-seryl-[protein] + ATP = O-phospho-L-seryl-[protein] + ADP + H(+). It catalyses the reaction L-threonyl-[protein] + ATP = O-phospho-L-threonyl-[protein] + ADP + H(+). Contains an N-terminal autoinhibitory domain. Activated by phosphorylation at Thr-816, inhibited by phosphorylation at Ser-928. Serine/threonine kinase which acts as a component of the MAP kinase signal transduction pathway. Once activated, acts as an upstream activator of the p38 MAPK signal transduction cascade through the phosphorylation and activation of several MAP kinase kinases. May function in a signal transduction pathway that is activated by various cell stresses and leads to apoptosis. Involved in phosphorylation of WNK4 in response to osmotic stress or hypotonic low-chloride stimulation via the p38 MAPK signal transduction cascade. In Mus musculus (Mouse), this protein is Mitogen-activated protein kinase kinase kinase 15.